The primary structure comprises 455 residues: Chromosomal replication initiator protein DnaA (455 aa).

Residues 1-74 (MFDIEKFWQH…IQSAYGYAGI (74 aa)) are domain I, interacts with DnaA modulators. A domain II region spans residues 74 to 117 (IEILPVFQINENNDSPERIVTPEPRYAIQLQQEKRAHKQFTKNL). Residues 118 to 334 (KLNEKYTFDN…GALVKVQAYA (217 aa)) are domain III, AAA+ region. Residues G162, G164, K165, and T166 each contribute to the ATP site. Residues 335-455 (TIERADINVN…VFDLKQMIEH (121 aa)) form a domain IV, binds dsDNA region.

Belongs to the DnaA family. Oligomerizes as a right-handed, spiral filament on DNA at oriC.

The protein localises to the cytoplasm. In terms of biological role, plays an essential role in the initiation and regulation of chromosomal replication. ATP-DnaA binds to the origin of replication (oriC) to initiate formation of the DNA replication initiation complex once per cell cycle. Binds the DnaA box (a 9 base pair repeat at the origin) and separates the double-stranded (ds)DNA. Forms a right-handed helical filament on oriC DNA; dsDNA binds to the exterior of the filament while single-stranded (ss)DNA is stabiized in the filament's interior. The ATP-DnaA-oriC complex binds and stabilizes one strand of the AT-rich DNA unwinding element (DUE), permitting loading of DNA polymerase. After initiation quickly degrades to an ADP-DnaA complex that is not apt for DNA replication. Binds acidic phospholipids. The polypeptide is Chromosomal replication initiator protein DnaA (Lactobacillus helveticus (strain DPC 4571)).